A 131-amino-acid polypeptide reads, in one-letter code: Holo-[acyl-carrier-protein] synthase (131 aa).

Mg(2+) is bound by residues D8 and E62.

The protein belongs to the P-Pant transferase superfamily. AcpS family. It depends on Mg(2+) as a cofactor.

Its subcellular location is the cytoplasm. The enzyme catalyses apo-[ACP] + CoA = holo-[ACP] + adenosine 3',5'-bisphosphate + H(+). Its function is as follows. Transfers the 4'-phosphopantetheine moiety from coenzyme A to a Ser of acyl-carrier-protein. The chain is Holo-[acyl-carrier-protein] synthase from Delftia acidovorans (strain DSM 14801 / SPH-1).